Consider the following 307-residue polypeptide: Pyridoxal 5'-phosphate synthase subunit PdxS (307 aa).

D37 provides a ligand contact to D-ribose 5-phosphate. K94 (schiff-base intermediate with D-ribose 5-phosphate) is an active-site residue. G166 contributes to the D-ribose 5-phosphate binding site. R178 contributes to the D-glyceraldehyde 3-phosphate binding site. D-ribose 5-phosphate-binding positions include G227 and 248–249 (GS).

It belongs to the PdxS/SNZ family. As to quaternary structure, in the presence of PdxT, forms a dodecamer of heterodimers.

The catalysed reaction is aldehydo-D-ribose 5-phosphate + D-glyceraldehyde 3-phosphate + L-glutamine = pyridoxal 5'-phosphate + L-glutamate + phosphate + 3 H2O + H(+). Its pathway is cofactor biosynthesis; pyridoxal 5'-phosphate biosynthesis. Functionally, catalyzes the formation of pyridoxal 5'-phosphate from ribose 5-phosphate (RBP), glyceraldehyde 3-phosphate (G3P) and ammonia. The ammonia is provided by the PdxT subunit. Can also use ribulose 5-phosphate and dihydroxyacetone phosphate as substrates, resulting from enzyme-catalyzed isomerization of RBP and G3P, respectively. This Mycobacterium leprae (strain Br4923) protein is Pyridoxal 5'-phosphate synthase subunit PdxS.